Here is a 318-residue protein sequence, read N- to C-terminus: NADH-ubiquinone oxidoreductase chain 1 (318 aa).

The next 8 helical transmembrane spans lie at 3–23, 69–89, 102–122, 144–164, 171–191, 222–242, 253–273, and 294–314; these read LINL…LTLL, MLFI…WTPL, MLFI…SGWA, VTLA…TLLS, YIWL…STLA, LFFL…IILF, ELYT…FLWI, and LPLT…LAGI.

The protein belongs to the complex I subunit 1 family. Core subunit of respiratory chain NADH dehydrogenase (Complex I) which is composed of 45 different subunits.

The protein localises to the mitochondrion inner membrane. The catalysed reaction is a ubiquinone + NADH + 5 H(+)(in) = a ubiquinol + NAD(+) + 4 H(+)(out). Its function is as follows. Core subunit of the mitochondrial membrane respiratory chain NADH dehydrogenase (Complex I) which catalyzes electron transfer from NADH through the respiratory chain, using ubiquinone as an electron acceptor. Essential for the catalytic activity and assembly of complex I. The sequence is that of NADH-ubiquinone oxidoreductase chain 1 (MT-ND1) from Murina florium (Flores tube-nosed bat).